A 278-amino-acid polypeptide reads, in one-letter code: Probable endonuclease 4 (278 aa).

Zn(2+) contacts are provided by His-70, His-108, Glu-143, Asp-176, His-179, His-210, Asp-223, His-225, and Glu-255.

This sequence belongs to the AP endonuclease 2 family. Zn(2+) is required as a cofactor.

The catalysed reaction is Endonucleolytic cleavage to 5'-phosphooligonucleotide end-products.. Endonuclease IV plays a role in DNA repair. It cleaves phosphodiester bonds at apurinic or apyrimidinic (AP) sites, generating a 3'-hydroxyl group and a 5'-terminal sugar phosphate. In Mycoplasmopsis agalactiae (strain NCTC 10123 / CIP 59.7 / PG2) (Mycoplasma agalactiae), this protein is Probable endonuclease 4.